Here is a 340-residue protein sequence, read N- to C-terminus: 4-amino-5-hydroxymethyl-2-methylpyrimidine phosphate synthase THI12 (340 aa).

N6-(pyridoxal phosphate)lysine is present on K62. Residue H66 is part of the active site. A pyridoxal 5'-phosphate-binding site is contributed by 115–118; that stretch reads GEFG. A CCCFC; essential for catalytic activity, may be the site of iron coordination motif is present at residues 195 to 199; that stretch reads CCCFC.

Belongs to the NMT1/THI5 family. In terms of assembly, homodimer. Requires Fe cation as cofactor.

It carries out the reaction N(6)-(pyridoxal phosphate)-L-lysyl-[4-amino-5-hydroxymethyl-2-methylpyrimidine phosphate synthase] + L-histidyl-[4-amino-5-hydroxymethyl-2-methylpyrimidine phosphate synthase] + 2 Fe(3+) + 4 H2O = L-lysyl-[4-amino-5-hydroxymethyl-2-methylpyrimidine phosphate synthase] + (2S)-2-amino-5-hydroxy-4-oxopentanoyl-[4-amino-5-hydroxymethyl-2-methylpyrimidine phosphate synthase] + 4-amino-2-methyl-5-(phosphooxymethyl)pyrimidine + 3-oxopropanoate + 2 Fe(2+) + 2 H(+). The protein operates within cofactor biosynthesis; thiamine diphosphate biosynthesis. Functionally, responsible for the formation of the pyrimidine heterocycle in the thiamine biosynthesis pathway. Catalyzes the formation of hydroxymethylpyrimidine phosphate (HMP-P) from histidine and pyridoxal phosphate (PLP). The protein uses PLP and the active site histidine to form HMP-P, generating an inactive enzyme. The enzyme can only undergo a single turnover, which suggests it is a suicide enzyme. In Saccharomyces cerevisiae (strain ATCC 204508 / S288c) (Baker's yeast), this protein is 4-amino-5-hydroxymethyl-2-methylpyrimidine phosphate synthase THI12.